Consider the following 88-residue polypeptide: MKNIVKIEQLELASAVVELGKKVGAGLAAIGLTGAGAGVGIVFAAFILAVGMNPNLRGELFKLAMLGFALSEAVGLLALMMSFLILYS.

Transmembrane regions (helical) follow at residues 30-50 (IGLT…ILAV) and 66-86 (LGFA…FLIL).

Belongs to the ATPase C chain family. In terms of assembly, F-type ATPases have 2 components, CF(1) - the catalytic core - and CF(0) - the membrane proton channel. CF(1) has five subunits: alpha(3), beta(3), gamma(1), delta(1), epsilon(1). CF(0) has three main subunits: a, b and c.

It localises to the mitochondrion membrane. Its function is as follows. Mitochondrial membrane ATP synthase (F(1)F(0) ATP synthase or Complex V) produces ATP from ADP in the presence of a proton gradient across the membrane which is generated by electron transport complexes of the respiratory chain. F-type ATPases consist of two structural domains, F(1) - containing the extramembraneous catalytic core and F(0) - containing the membrane proton channel, linked together by a central stalk and a peripheral stalk. During catalysis, ATP synthesis in the catalytic domain of F(1) is coupled via a rotary mechanism of the central stalk subunits to proton translocation. Part of the complex F(0) domain. A homomeric c-ring of probably 10 subunits is part of the complex rotary element. In Dictyostelium citrinum (Slime mold), this protein is ATP synthase subunit 9, mitochondrial (atp9).